We begin with the raw amino-acid sequence, 218 residues long: 7-cyano-7-deazaguanine synthase (218 aa).

Position 9–19 (9–19) interacts with ATP; it reads YSGGMDSFTVL. Residues Cys-185, Cys-193, Cys-196, and Cys-199 each contribute to the Zn(2+) site.

It belongs to the QueC family. Zn(2+) is required as a cofactor.

The enzyme catalyses 7-carboxy-7-deazaguanine + NH4(+) + ATP = 7-cyano-7-deazaguanine + ADP + phosphate + H2O + H(+). The protein operates within purine metabolism; 7-cyano-7-deazaguanine biosynthesis. Catalyzes the ATP-dependent conversion of 7-carboxy-7-deazaguanine (CDG) to 7-cyano-7-deazaguanine (preQ(0)). This chain is 7-cyano-7-deazaguanine synthase, found in Pseudoalteromonas translucida (strain TAC 125).